The primary structure comprises 909 residues: Phosphoenolpyruvate carboxylase (909 aa).

Catalysis depends on residues His-151 and Lys-578.

It belongs to the PEPCase type 1 family. Mg(2+) is required as a cofactor.

It carries out the reaction oxaloacetate + phosphate = phosphoenolpyruvate + hydrogencarbonate. In terms of biological role, forms oxaloacetate, a four-carbon dicarboxylic acid source for the tricarboxylic acid cycle. This chain is Phosphoenolpyruvate carboxylase, found in Caulobacter vibrioides (strain ATCC 19089 / CIP 103742 / CB 15) (Caulobacter crescentus).